The sequence spans 211 residues: Ion-translocating oxidoreductase complex subunit G (211 aa).

The chain crosses the membrane as a helical span at residues 9 to 29; sequence GLTLAIFACATTGLVALTQYL. An FMN phosphoryl threonine modification is found at threonine 175.

The protein belongs to the RnfG family. In terms of assembly, the complex is composed of six subunits: RnfA, RnfB, RnfC, RnfD, RnfE and RnfG. It depends on FMN as a cofactor.

It is found in the cell inner membrane. Functionally, part of a membrane-bound complex that couples electron transfer with translocation of ions across the membrane. In Vibrio parahaemolyticus serotype O3:K6 (strain RIMD 2210633), this protein is Ion-translocating oxidoreductase complex subunit G.